The sequence spans 414 residues: uncharacterized protein (414 aa).

The helical transmembrane segment at 367 to 384 (TTWALTLICIACILLFFV) threads the bilayer.

The protein resides in the virion membrane. This is an uncharacterized protein from Human cytomegalovirus (strain Merlin) (HHV-5).